We begin with the raw amino-acid sequence, 275 residues long: Probable ABC transporter permease protein PH1216 (275 aa).

Transmembrane regions (helical) follow at residues 10–30, 73–93, 105–125, 137–157, 181–203, and 241–261; these read LLYIVLIFLAAWYLLPIWSAI, IFTTFATIFSTILGSIAGFTI, LLALISFGIFLPYQSILIPLV, ILGLILTHTAYGIPITTLLFT, IYTKVILPLSKAPFVVTGIYQFT, and IQMAGALIVALPTLLIMIALG. In terms of domain architecture, ABC transmembrane type-1 spans 68 to 260; sequence ILNSLIFTTF…LPTLLIMIAL (193 aa).

The protein belongs to the binding-protein-dependent transport system permease family. MalFG subfamily.

It localises to the cell membrane. Its function is as follows. Probably part of a binding-protein-dependent transport system PH1214/15/16. Probably responsible for the translocation of the substrate across the membrane. This Pyrococcus horikoshii (strain ATCC 700860 / DSM 12428 / JCM 9974 / NBRC 100139 / OT-3) protein is Probable ABC transporter permease protein PH1216.